Reading from the N-terminus, the 291-residue chain is Protease HtpX (291 aa).

The next 2 helical transmembrane spans lie at 4 to 24 and 36 to 56; these read IALFLATNLAVMIVFSIVLNI and LSGLLVMAVLFGFGGSLISLM. His143 serves as a coordination point for Zn(2+). Residue Glu144 is part of the active site. His147 is a binding site for Zn(2+). Transmembrane regions (helical) follow at residues 151–171 and 199–219; these read GDMITMTLMQGVVNTFVIFLS and FIVSTVLELAFGFLASFLTMW. Zn(2+) is bound at residue Glu225.

It belongs to the peptidase M48B family. The cofactor is Zn(2+).

It localises to the cell inner membrane. This chain is Protease HtpX, found in Aliivibrio fischeri (strain ATCC 700601 / ES114) (Vibrio fischeri).